A 244-amino-acid chain; its full sequence is tRNA pseudouridine synthase A (244 aa).

Residue Asp-52 is the Nucleophile of the active site. Residue Tyr-111 participates in substrate binding.

It belongs to the tRNA pseudouridine synthase TruA family. Homodimer.

The enzyme catalyses uridine(38/39/40) in tRNA = pseudouridine(38/39/40) in tRNA. Its function is as follows. Formation of pseudouridine at positions 38, 39 and 40 in the anticodon stem and loop of transfer RNAs. This chain is tRNA pseudouridine synthase A, found in Thermosipho melanesiensis (strain DSM 12029 / CIP 104789 / BI429).